The chain runs to 522 residues: N-acetylgalactosamine-6-sulfatase (522 aa).

Residues 1–26 (MAAVVAATRWWQLLLVLSAAGMGASG) form the signal peptide. A catalytic domain region spans residues 27–379 (APQPPNILLL…PTLLQGRLMD (353 aa)). 3 residues coordinate Ca(2+): D39, D40, and C79. The active-site Nucleophile is the C79. C79 bears the 3-oxoalanine (Cys) mark. Residue H142 is part of the active site. N204 carries N-linked (GlcNAc...) asparagine glycosylation. Positions 288 and 289 each coordinate Ca(2+). Cysteines 308 and 419 form a disulfide. N-linked (GlcNAc...) asparagine glycosylation is present at N423. 2 disulfides stabilise this stretch: C489-C518 and C501-C507.

The protein belongs to the sulfatase family. Homodimer. It depends on Ca(2+) as a cofactor. Post-translationally, the conversion to 3-oxoalanine (also known as C-formylglycine, FGly), of a serine or cysteine residue in prokaryotes and of a cysteine residue in eukaryotes, is critical for catalytic activity.

Its subcellular location is the lysosome. It catalyses the reaction Hydrolysis of the 6-sulfate groups of the N-acetyl-D-galactosamine 6-sulfate units of chondroitin sulfate and of the D-galactose 6-sulfate units of keratan sulfate.. This is N-acetylgalactosamine-6-sulfatase (GALNS) from Homo sapiens (Human).